Here is a 297-residue protein sequence, read N- to C-terminus: Large ribosomal subunit protein uL18 (297 aa).

It belongs to the universal ribosomal protein uL18 family. Component of the large ribosomal subunit (LSU).

The protein localises to the cytoplasm. It is found in the nucleus. In terms of biological role, component of the ribosome, a large ribonucleoprotein complex responsible for the synthesis of proteins in the cell. The small ribosomal subunit (SSU) binds messenger RNAs (mRNAs) and translates the encoded message by selecting cognate aminoacyl-transfer RNA (tRNA) molecules. The large subunit (LSU) contains the ribosomal catalytic site termed the peptidyl transferase center (PTC), which catalyzes the formation of peptide bonds, thereby polymerizing the amino acids delivered by tRNAs into a polypeptide chain. The nascent polypeptides leave the ribosome through a tunnel in the LSU and interact with protein factors that function in enzymatic processing, targeting, and the membrane insertion of nascent chains at the exit of the ribosomal tunnel. The sequence is that of Large ribosomal subunit protein uL18 (RpL5) from Lysiphlebus testaceipes (Greenbugs aphid parastoid).